Reading from the N-terminus, the 421-residue chain is UDP-N-acetylglucosamine 1-carboxyvinyltransferase (421 aa).

22–23 provides a ligand contact to phosphoenolpyruvate; the sequence is KN. Residue Arg-94 participates in UDP-N-acetyl-alpha-D-glucosamine binding. The active-site Proton donor is Cys-118. Residue Cys-118 is modified to 2-(S-cysteinyl)pyruvic acid O-phosphothioketal. Residues 123–127, Asp-308, and Ile-330 contribute to the UDP-N-acetyl-alpha-D-glucosamine site; that span reads RPMDL.

This sequence belongs to the EPSP synthase family. MurA subfamily.

The protein localises to the cytoplasm. The enzyme catalyses phosphoenolpyruvate + UDP-N-acetyl-alpha-D-glucosamine = UDP-N-acetyl-3-O-(1-carboxyvinyl)-alpha-D-glucosamine + phosphate. Its pathway is cell wall biogenesis; peptidoglycan biosynthesis. Its function is as follows. Cell wall formation. Adds enolpyruvyl to UDP-N-acetylglucosamine. The polypeptide is UDP-N-acetylglucosamine 1-carboxyvinyltransferase (Ruegeria pomeroyi (strain ATCC 700808 / DSM 15171 / DSS-3) (Silicibacter pomeroyi)).